The sequence spans 196 residues: Ribonuclease HII (196 aa).

Residues 13 to 196 (LLVAGVDEAG…SFSPLKKKLF (184 aa)) enclose the RNase H type-2 domain. Asp-19, Glu-20, and Asp-111 together coordinate a divalent metal cation.

The protein belongs to the RNase HII family. It depends on Mn(2+) as a cofactor. Requires Mg(2+) as cofactor.

Its subcellular location is the cytoplasm. It catalyses the reaction Endonucleolytic cleavage to 5'-phosphomonoester.. Endonuclease that specifically degrades the RNA of RNA-DNA hybrids. The chain is Ribonuclease HII (rnhB) from Aquifex aeolicus (strain VF5).